We begin with the raw amino-acid sequence, 240 residues long: Probable transcriptional regulatory protein HP_0162 (240 aa).

It belongs to the TACO1 family.

It is found in the cytoplasm. This Helicobacter pylori (strain ATCC 700392 / 26695) (Campylobacter pylori) protein is Probable transcriptional regulatory protein HP_0162.